The chain runs to 319 residues: Aspartate carbamoyltransferase catalytic subunit (319 aa).

Arginine 65 and threonine 66 together coordinate carbamoyl phosphate. Lysine 93 provides a ligand contact to L-aspartate. Positions 115, 149, and 152 each coordinate carbamoyl phosphate. L-aspartate-binding residues include arginine 182 and arginine 237. The carbamoyl phosphate site is built by glycine 278 and proline 279.

It belongs to the aspartate/ornithine carbamoyltransferase superfamily. ATCase family. In terms of assembly, heterododecamer (2C3:3R2) of six catalytic PyrB chains organized as two trimers (C3), and six regulatory PyrI chains organized as three dimers (R2).

The enzyme catalyses carbamoyl phosphate + L-aspartate = N-carbamoyl-L-aspartate + phosphate + H(+). The protein operates within pyrimidine metabolism; UMP biosynthesis via de novo pathway; (S)-dihydroorotate from bicarbonate: step 2/3. Functionally, catalyzes the condensation of carbamoyl phosphate and aspartate to form carbamoyl aspartate and inorganic phosphate, the committed step in the de novo pyrimidine nucleotide biosynthesis pathway. The sequence is that of Aspartate carbamoyltransferase catalytic subunit from Dechloromonas aromatica (strain RCB).